Here is a 382-residue protein sequence, read N- to C-terminus: UDP-N-acetylenolpyruvoylglucosamine reductase (382 aa).

Positions 50-253 constitute an FAD-binding PCMH-type domain; the sequence is RVGGPAVLAE…REAVLRLRAS (204 aa). The active site involves Arg193. The active-site Proton donor is the Ser270. The active site involves Glu374.

Belongs to the MurB family. FAD is required as a cofactor.

The protein localises to the cytoplasm. It catalyses the reaction UDP-N-acetyl-alpha-D-muramate + NADP(+) = UDP-N-acetyl-3-O-(1-carboxyvinyl)-alpha-D-glucosamine + NADPH + H(+). It functions in the pathway cell wall biogenesis; peptidoglycan biosynthesis. Functionally, cell wall formation. The polypeptide is UDP-N-acetylenolpyruvoylglucosamine reductase (Nocardia farcinica (strain IFM 10152)).